A 344-amino-acid chain; its full sequence is 5,10-methenyltetrahydromethanopterin hydrogenase (344 aa).

It belongs to the HMD family. As to quaternary structure, homotetramer.

It carries out the reaction 5,10-methenyl-5,6,7,8-tetrahydromethanopterin + H2 = 5,10-methylenetetrahydromethanopterin + H(+). The protein operates within one-carbon metabolism; methanogenesis from CO(2); 5,10-methylene-5,6,7,8-tetrahydromethanopterin from 5,10-methenyl-5,6,7,8-tetrahydromethanopterin (hydrogen route): step 1/1. With respect to regulation, activity requires salt; 100 mM sodium or potassium salts of chloride, phosphate or sulfate are equally effective. Inactivated by O(2). In terms of biological role, catalyzes the reversible reduction of methenyl-H(4)MPT(+) to methylene-H(4)MPT. The protein is 5,10-methenyltetrahydromethanopterin hydrogenase of Methanothermobacter marburgensis (strain ATCC BAA-927 / DSM 2133 / JCM 14651 / NBRC 100331 / OCM 82 / Marburg) (Methanobacterium thermoautotrophicum).